Reading from the N-terminus, the 338-residue chain is MNLKKFPRHALTFGPTPIHPLKRLSAHLGGEVELYAKREDCNSGLAFGGNKTRKLEYLIPEALEGGYDTLVSIGGIQSNQTRQVAAVAAHLGLKCVLVQENWVNYSDAVYDRVGNIEMSRIMGADVRLDSAGFDIGIRKSWEEAMADVRKAGGKPFPIPAGCSEHPRGGLGFVGFAEEVRQQEAELGFKFDYIVTCSVTGSTQAGMVVGFAADGRADRVIGIDASAKPEQTFAQIVRIAKGTAELVELGRDITDKDVVLDRRFGGPEYGLPNEGTLESIRLCARLEGMLTDPVYEGKSMHGMIEKVRLGEFPAGSKVLYAHLGGVPALNAYSFLFRNG.

Lys-51 is subject to N6-(pyridoxal phosphate)lysine. Ser-78 (nucleophile) is an active-site residue.

It belongs to the ACC deaminase/D-cysteine desulfhydrase family. As to quaternary structure, homotrimer. Pyridoxal 5'-phosphate is required as a cofactor.

It carries out the reaction 1-aminocyclopropane-1-carboxylate + H2O = 2-oxobutanoate + NH4(+). In terms of biological role, catalyzes a cyclopropane ring-opening reaction, the irreversible conversion of 1-aminocyclopropane-1-carboxylate (ACC) to ammonia and alpha-ketobutyrate. Allows growth on ACC as a nitrogen source. This chain is 1-aminocyclopropane-1-carboxylate deaminase, found in Variovorax paradoxus (strain S110).